Reading from the N-terminus, the 355-residue chain is Vacuolar protein sorting-associated protein 37C (355 aa).

Residue Ser29 is modified to Phosphoserine. A VPS37 C-terminal domain is found at 78 to 167 (VERCQEQKAK…RKPRASQELA (90 aa)). The segment at 159-355 (KPRASQELAG…PPPGPAWPGY (197 aa)) is disordered. 2 stretches are compositionally biased toward pro residues: residues 170 to 186 (APPP…PQGT) and 194 to 205 (PQPPSAMPPYPL). Residues 246–257 (PAAQPGPRGAAG) are compositionally biased toward low complexity. A compositionally biased stretch (pro residues) spans 321-355 (PGQPQPSVPLQPPYPPGPAPPYGFPPPPGPAWPGY).

It belongs to the VPS37 family. Component of the ESCRT-I complex (endosomal sorting complex required for transport I) which consists of TSG101, VPS28, a VPS37 protein (VPS37A to -D) and MVB12A or MVB12B in a 1:1:1:1 stoichiometry. Interacts with TSG101, VPS28, MVB12A and MVB12B. Component of the ESCRT-I complex (endosomal sorting complex required for transport I) which consists of TSG101, VPS28, a VPS37 protein (VPS37A to -D) and UBAP1 in a 1:1:1:1 stoichiometry. Interacts with HGS and STAM2. Interacts with CEP55. Post-translationally, phosphorylated by TBK1.

It is found in the late endosome membrane. Its function is as follows. Component of the ESCRT-I complex, a regulator of vesicular trafficking process. Required for the sorting of endocytic ubiquitinated cargos into multivesicular bodies. May be involved in cell growth and differentiation. The protein is Vacuolar protein sorting-associated protein 37C (VPS37C) of Pongo abelii (Sumatran orangutan).